The primary structure comprises 644 residues: Chaperone protein HtpG (644 aa).

The segment at 1 to 352 is a; substrate-binding; that stretch reads MNARVEQLEF…AQDMSLNVSR (352 aa). Residues 353–566 form a b region; that stretch reads EILQQDRQIK…AFGITPALAR (214 aa). A c region spans residues 567–644; sequence LYRASGQDIP…ILADRLARTL (78 aa).

The protein belongs to the heat shock protein 90 family. Homodimer.

It is found in the cytoplasm. In terms of biological role, molecular chaperone. Has ATPase activity. The protein is Chaperone protein HtpG of Mycolicibacterium paratuberculosis (strain ATCC BAA-968 / K-10) (Mycobacterium paratuberculosis).